The chain runs to 141 residues: Large ribosomal subunit protein uL23A (141 aa).

2 positions are modified to phosphoserine: Ser68 and Ser70.

Belongs to the universal ribosomal protein uL23 family. Component of the large ribosomal subunit (LSU). Mature yeast ribosomes consist of a small (40S) and a large (60S) subunit. The 40S small subunit contains 1 molecule of ribosomal RNA (18S rRNA) and at least 33 different proteins. The large 60S subunit contains 3 rRNA molecules (25S, 5.8S and 5S rRNA) and at least 46 different proteins. uL23 is associated with the polypeptide exit tunnel.

The protein resides in the cytoplasm. In terms of biological role, this protein binds to a specific region on the 26S rRNA. Component of the ribosome, a large ribonucleoprotein complex responsible for the synthesis of proteins in the cell. The small ribosomal subunit (SSU) binds messenger RNAs (mRNAs) and translates the encoded message by selecting cognate aminoacyl-transfer RNA (tRNA) molecules. The large subunit (LSU) contains the ribosomal catalytic site termed the peptidyl transferase center (PTC), which catalyzes the formation of peptide bonds, thereby polymerizing the amino acids delivered by tRNAs into a polypeptide chain. The nascent polypeptides leave the ribosome through a tunnel in the LSU and interact with protein factors that function in enzymatic processing, targeting, and the membrane insertion of nascent chains at the exit of the ribosomal tunnel. uL23 is a major component of the universal docking site for these factors at the polypeptide exit tunnel. This Schizosaccharomyces pombe (strain 972 / ATCC 24843) (Fission yeast) protein is Large ribosomal subunit protein uL23A (rpl2501).